Consider the following 375-residue polypeptide: Methylthioribose-1-phosphate isomerase (375 aa).

Residues 53 to 55 (RGA), Arg90, and Gln202 each bind substrate. The Proton donor role is filled by Asp243. 253–254 (NK) contacts substrate.

This sequence belongs to the eIF-2B alpha/beta/delta subunits family. MtnA subfamily.

It catalyses the reaction 5-(methylsulfanyl)-alpha-D-ribose 1-phosphate = 5-(methylsulfanyl)-D-ribulose 1-phosphate. It participates in amino-acid biosynthesis; L-methionine biosynthesis via salvage pathway; L-methionine from S-methyl-5-thio-alpha-D-ribose 1-phosphate: step 1/6. Catalyzes the interconversion of methylthioribose-1-phosphate (MTR-1-P) into methylthioribulose-1-phosphate (MTRu-1-P). In Rhodospirillum centenum (strain ATCC 51521 / SW), this protein is Methylthioribose-1-phosphate isomerase.